A 513-amino-acid chain; its full sequence is GMP synthase [glutamine-hydrolyzing] (513 aa).

One can recognise a Glutamine amidotransferase type-1 domain in the interval 8 to 198 (MILVLDFGSQ…VFGVCDCEGK (191 aa)). The active-site Nucleophile is Cys85. Residues His172 and Glu174 contribute to the active site. The region spanning 199 to 388 (WSMENFIEIE…LGLPDDIVWR (190 aa)) is the GMPS ATP-PPase domain. 226–232 (SGGVDSS) serves as a coordination point for ATP.

Homodimer.

The catalysed reaction is XMP + L-glutamine + ATP + H2O = GMP + L-glutamate + AMP + diphosphate + 2 H(+). The protein operates within purine metabolism; GMP biosynthesis; GMP from XMP (L-Gln route): step 1/1. Its function is as follows. Catalyzes the synthesis of GMP from XMP. This is GMP synthase [glutamine-hydrolyzing] from Bacillus velezensis (strain DSM 23117 / BGSC 10A6 / LMG 26770 / FZB42) (Bacillus amyloliquefaciens subsp. plantarum).